Here is a 140-residue protein sequence, read N- to C-terminus: MGYTIQLDKDGDYYWDDDSHDPYMRANAAAFHAAPHAAAFNAAAPHAAAFNAAAPHAAAFNAAAPHAAAFNTATHHAFHEPFIKLNLTDKNIFNGLGFILIVIFIYLLLITLQQMLTRHIYNTVQHCVKAHLDSKNLQSR.

The N-linked (GlcNAc...) asparagine; by host glycan is linked to Asn-86. The helical transmembrane segment at 92–112 threads the bilayer; it reads IFNGLGFILIVIFIYLLLITL.

The protein belongs to the asfivirus B117L family.

The protein resides in the host membrane. Its subcellular location is the virion. This is an uncharacterized protein from African swine fever virus (isolate Pig/Kenya/KEN-50/1950) (ASFV).